The following is an 887-amino-acid chain: Putative RNA-binding protein 15B (887 aa).

A disordered region spans residues 1-132; the sequence is MKRQSERDSS…EPAGPGSTAA (132 aa). Positions 10-20 are enriched in low complexity; the sequence is SPSGRGSSSSA. Basic and acidic residues-rich tracts occupy residues 22 to 34 and 65 to 77; these read RPREREREAEAGG and GHRDGRAAGDANH. Positions 83–94 are enriched in gly residues; it reads RSSGAPGGGGRT. Positions 95 to 110 are enriched in low complexity; that stretch reads GKASGDPGAGGASPRA. Phosphoserine occurs at positions 107 and 111. Over residues 111 to 122 the composition is skewed to pro residues; sequence SPLPPPPPPPGA. A compositionally biased stretch (low complexity) spans 123-132; the sequence is EPAGPGSTAA. The region spanning 136-216 is the RRM 1 domain; it reads KTLLISSLSP…RPLKVEPVYL (81 aa). Residue Lys-210 forms a Glycyl lysine isopeptide (Lys-Gly) (interchain with G-Cter in SUMO2) linkage. A disordered region spans residues 215–249; sequence YLRGGGSSRRSSSSSAAASTPPPGPPAPADPLGYL. Positions 222–233 are enriched in low complexity; sequence SRRSSSSSAAAS. The span at 234 to 243 shows a compositional bias: pro residues; that stretch reads TPPPGPPAPA. Phosphoserine is present on residues Ser-261 and Ser-263. RRM domains follow at residues 333–410 and 414–488; these read RNLF…YGKA and TRLW…FAKA. Thr-529 is subject to Phosphothreonine. Residues Ser-549, Ser-553, and Ser-559 each carry the phosphoserine modification. The segment at 549–703 is disordered; it reads SLSKSSDRRN…TLEEPKHETK (155 aa). Composition is skewed to basic and acidic residues over residues 570 to 613, 623 to 643, and 668 to 700; these read RSGE…ERSR, RGSDRTPERSRKENHSSEGTK, and EAPDSSHGKKTRESERNHRTTEAEPKTLEEPKH. A Nuclear localization signal motif is present at residues 590-594; it reads RRKRR. Residue Lys-699 forms a Glycyl lysine isopeptide (Lys-Gly) (interchain with G-Cter in SUMO2) linkage. The 179-residue stretch at 708–886 folds into the SPOC domain; the sequence is LSEYAQTLQL…HMVIVIVRDT (179 aa). Residues 719-887 form an interaction with Epstein-Barr virus BMLF1 region; that stretch reads WNGLLVLKNS…MVIVIVRDTA (169 aa).

This sequence belongs to the RRM Spen family. In terms of assembly, component of the WMM complex, a N6-methyltransferase complex composed of a catalytic subcomplex, named MAC, and of an associated subcomplex, named MACOM. The MAC subcomplex is composed of METTL3 and METTL14. The MACOM subcomplex is composed of WTAP, ZC3H13, CBLL1/HAKAI, VIRMA, and, in some cases of RBM15 (RBM15 or RBM15B). May interact with NCOR2. Interacts with NXF1, the interaction is required to promote mRNA export.

Its subcellular location is the nucleus. The protein localises to the nucleoplasm. It is found in the nucleus speckle. The protein resides in the nucleus envelope. RNA-binding protein that acts as a key regulator of N6-methyladenosine (m6A) methylation of RNAs, thereby regulating different processes, such as alternative splicing of mRNAs and X chromosome inactivation mediated by Xist RNA. Associated component of the WMM complex, a complex that mediates N6-methyladenosine (m6A) methylation of RNAs, a modification that plays a role in the efficiency of mRNA splicing and RNA processing. Plays a key role in m6A methylation, possibly by binding target RNAs and recruiting the WMM complex. Involved in random X inactivation mediated by Xist RNA: acts by binding Xist RNA and recruiting the WMM complex, which mediates m6A methylation, leading to target YTHDC1 reader on Xist RNA and promoting transcription repression activity of Xist. Functions in the regulation of alternative or illicit splicing, possibly by regulating m6A methylation. Inhibits pre-mRNA splicing. Also functions as a mRNA export factor by acting as a cofactor for the nuclear export receptor NXF1. This is Putative RNA-binding protein 15B (Rbm15b) from Mus musculus (Mouse).